Here is a 419-residue protein sequence, read N- to C-terminus: Serine--tRNA ligase (419 aa).

Position 226–228 (226–228 (TSE)) interacts with L-serine. Residues 257 to 259 (RRE) and Val273 contribute to the ATP site. Glu280 lines the L-serine pocket. Position 344-347 (344-347 (ELTS)) interacts with ATP. Thr379 lines the L-serine pocket.

This sequence belongs to the class-II aminoacyl-tRNA synthetase family. Type-1 seryl-tRNA synthetase subfamily. In terms of assembly, homodimer. The tRNA molecule binds across the dimer.

Its subcellular location is the cytoplasm. It carries out the reaction tRNA(Ser) + L-serine + ATP = L-seryl-tRNA(Ser) + AMP + diphosphate + H(+). It catalyses the reaction tRNA(Sec) + L-serine + ATP = L-seryl-tRNA(Sec) + AMP + diphosphate + H(+). The protein operates within aminoacyl-tRNA biosynthesis; selenocysteinyl-tRNA(Sec) biosynthesis; L-seryl-tRNA(Sec) from L-serine and tRNA(Sec): step 1/1. Catalyzes the attachment of serine to tRNA(Ser). Is also able to aminoacylate tRNA(Sec) with serine, to form the misacylated tRNA L-seryl-tRNA(Sec), which will be further converted into selenocysteinyl-tRNA(Sec). The chain is Serine--tRNA ligase from Mycobacterium tuberculosis (strain CDC 1551 / Oshkosh).